The primary structure comprises 337 residues: Ketol-acid reductoisomerase (NADP(+)) (337 aa).

A KARI N-terminal Rossmann domain is found at 3–183; that stretch reads VEVFYDDDAD…GGTRAGVIKT (181 aa). NADP(+) is bound by residues 26–29, Ser52, Ser54, and 84–87; these read YGSQ and DTAQ. His109 is an active-site residue. Gly135 contributes to the NADP(+) binding site. The KARI C-terminal knotted domain maps to 184–329; the sequence is TFTEETETDL…GRLRAMMSWV (146 aa). The Mg(2+) site is built by Asp192, Glu196, Glu228, and Glu232. A substrate-binding site is contributed by Ser253.

Belongs to the ketol-acid reductoisomerase family. The cofactor is Mg(2+).

It carries out the reaction (2R)-2,3-dihydroxy-3-methylbutanoate + NADP(+) = (2S)-2-acetolactate + NADPH + H(+). It catalyses the reaction (2R,3R)-2,3-dihydroxy-3-methylpentanoate + NADP(+) = (S)-2-ethyl-2-hydroxy-3-oxobutanoate + NADPH + H(+). It functions in the pathway amino-acid biosynthesis; L-isoleucine biosynthesis; L-isoleucine from 2-oxobutanoate: step 2/4. Its pathway is amino-acid biosynthesis; L-valine biosynthesis; L-valine from pyruvate: step 2/4. Involved in the biosynthesis of branched-chain amino acids (BCAA). Catalyzes an alkyl-migration followed by a ketol-acid reduction of (S)-2-acetolactate (S2AL) to yield (R)-2,3-dihydroxy-isovalerate. In the isomerase reaction, S2AL is rearranged via a Mg-dependent methyl migration to produce 3-hydroxy-3-methyl-2-ketobutyrate (HMKB). In the reductase reaction, this 2-ketoacid undergoes a metal-dependent reduction by NADPH to yield (R)-2,3-dihydroxy-isovalerate. This is Ketol-acid reductoisomerase (NADP(+)) from Salinispora tropica (strain ATCC BAA-916 / DSM 44818 / JCM 13857 / NBRC 105044 / CNB-440).